We begin with the raw amino-acid sequence, 762 residues long: 5-methyltetrahydropteroyltriglutamate--homocysteine methyltransferase (762 aa).

Residues 17 to 20 (REWK) and lysine 111 contribute to the 5-methyltetrahydropteroyltri-L-glutamate site. Residues 435-437 (IGS) and glutamate 488 each bind L-homocysteine. L-methionine-binding positions include 435–437 (IGS) and glutamate 488. 5-methyltetrahydropteroyltri-L-glutamate contacts are provided by residues 519 to 520 (RC) and tryptophan 565. An L-homocysteine-binding site is contributed by aspartate 603. Aspartate 603 provides a ligand contact to L-methionine. Position 609 (glutamate 609) interacts with 5-methyltetrahydropteroyltri-L-glutamate. Residues histidine 645, cysteine 647, and glutamate 669 each coordinate Zn(2+). Histidine 698 functions as the Proton donor in the catalytic mechanism. Cysteine 730 is a binding site for Zn(2+).

Belongs to the vitamin-B12 independent methionine synthase family. Zn(2+) serves as cofactor.

The enzyme catalyses 5-methyltetrahydropteroyltri-L-glutamate + L-homocysteine = tetrahydropteroyltri-L-glutamate + L-methionine. Its pathway is amino-acid biosynthesis; L-methionine biosynthesis via de novo pathway; L-methionine from L-homocysteine (MetE route): step 1/1. In terms of biological role, catalyzes the transfer of a methyl group from 5-methyltetrahydrofolate to homocysteine resulting in methionine formation. The polypeptide is 5-methyltetrahydropteroyltriglutamate--homocysteine methyltransferase (Bacillus cereus (strain AH187)).